The primary structure comprises 370 residues: E3 ubiquitin-protein ligase E3D (370 aa).

The residue at position 2 (alanine 2) is an N-acetylalanine. The short motif at 129–159 (PLPSENWSALVGEWCCHPDPFANKPLHPREN) is the BRAT1-like motif element. Position 144 (cysteine 144) interacts with Zn(2+). Residues 214-236 (QPSEGSFPNIPRSQFVQSVIARC) form an interaction with UBE2C region. An HECT-like region spans residues 332-368 (LPSTTCLELLLILSRNNASLPLSLRQMNSFQLWCSHC).

As to quaternary structure, interacts with UBE2C/UbcH10 (E2 ubiquitin-conjugating enzyme). In vitro, interacts with cyclin-B. In terms of processing, ubiquitinated by UBCH10 (E2 ubiquitin-conjugating enzyme).

The protein localises to the cytoplasm. The catalysed reaction is S-ubiquitinyl-[E2 ubiquitin-conjugating enzyme]-L-cysteine + [acceptor protein]-L-lysine = [E2 ubiquitin-conjugating enzyme]-L-cysteine + N(6)-ubiquitinyl-[acceptor protein]-L-lysine.. It functions in the pathway protein modification; protein ubiquitination. Its function is as follows. E3 ubiquitin-protein ligase which accepts ubiquitin from specific E2 ubiquitin-conjugating enzymes, and transfers it to substrates, generally promoting their degradation by the proteasome. Independently of its E3 ubiquitin-protein ligase activity, acts as an inhibitor of CPSF3 endonuclease activity by blocking CPSF3 active site. The sequence is that of E3 ubiquitin-protein ligase E3D (Ube3d) from Rattus norvegicus (Rat).